Consider the following 151-residue polypeptide: Large ribosomal subunit protein bL9 (151 aa).

It belongs to the bacterial ribosomal protein bL9 family.

In terms of biological role, binds to the 23S rRNA. This chain is Large ribosomal subunit protein bL9, found in Prochlorococcus marinus (strain AS9601).